The primary structure comprises 207 residues: Probable RNA 2'-phosphotransferase (207 aa).

This sequence belongs to the KptA/TPT1 family.

Removes the 2'-phosphate from RNA via an intermediate in which the phosphate is ADP-ribosylated by NAD followed by a presumed transesterification to release the RNA and generate ADP-ribose 1''-2''-cyclic phosphate (APPR&gt;P). May function as an ADP-ribosylase. This is Probable RNA 2'-phosphotransferase from Methanosarcina acetivorans (strain ATCC 35395 / DSM 2834 / JCM 12185 / C2A).